A 228-amino-acid chain; its full sequence is MLESIQAVQAPYYGDVSYRTPPPDLPSLLLKERIIYLGMPLFSSDDVKRQVGFDVTELIIAQLLYLEFDNPEKPIYFYINSTGTSWYTGDAIGYETEAFAICDTMRYIKPPVHTICIGQAMGTAAMILSGGTPGNRASLPHATIVLNQPRTGAQGQASDIQIRAKEVLANKRTMLEIFARNTGQDPDRLARDTDRMLYMTPAQAVEYGLIDRVLDSRKDLPAPLPSFS.

This sequence belongs to the peptidase S14 family.

Functionally, has lost the two conserved residues (Ser and His) proposed to be part of the active site. Therefore it could be inactive. This is Putative ATP-dependent Clp protease proteolytic subunit-like (clpR) from Synechococcus elongatus (strain ATCC 33912 / PCC 7942 / FACHB-805) (Anacystis nidulans R2).